Here is a 326-residue protein sequence, read N- to C-terminus: Transposase InsH for insertion sequence element IS5A (326 aa).

Belongs to the transposase 11 family.

In terms of biological role, involved in the transposition of the insertion sequence IS5. In Escherichia coli (strain K12), this protein is Transposase InsH for insertion sequence element IS5A (insH1).